The following is a 72-amino-acid chain: Translation initiation factor IF-1 (72 aa).

The S1-like domain occupies 1–72 (MSKEEVLEFS…TKGRITYRYK (72 aa)).

This sequence belongs to the IF-1 family. Component of the 30S ribosomal translation pre-initiation complex which assembles on the 30S ribosome in the order IF-2 and IF-3, IF-1 and N-formylmethionyl-tRNA(fMet); mRNA recruitment can occur at any time during PIC assembly.

It is found in the cytoplasm. In terms of biological role, one of the essential components for the initiation of protein synthesis. Stabilizes the binding of IF-2 and IF-3 on the 30S subunit to which N-formylmethionyl-tRNA(fMet) subsequently binds. Helps modulate mRNA selection, yielding the 30S pre-initiation complex (PIC). Upon addition of the 50S ribosomal subunit IF-1, IF-2 and IF-3 are released leaving the mature 70S translation initiation complex. This chain is Translation initiation factor IF-1, found in Bartonella tribocorum (strain CIP 105476 / IBS 506).